Reading from the N-terminus, the 201-residue chain is FMN-dependent NADH:quinone oxidoreductase (201 aa).

FMN-binding positions include Ser10, 16-18 (SQS), 96-99 (MYNF), and 140-143 (SRGG).

Belongs to the azoreductase type 1 family. Homodimer. The cofactor is FMN.

It carries out the reaction 2 a quinone + NADH + H(+) = 2 a 1,4-benzosemiquinone + NAD(+). The enzyme catalyses N,N-dimethyl-1,4-phenylenediamine + anthranilate + 2 NAD(+) = 2-(4-dimethylaminophenyl)diazenylbenzoate + 2 NADH + 2 H(+). In terms of biological role, quinone reductase that provides resistance to thiol-specific stress caused by electrophilic quinones. Functionally, also exhibits azoreductase activity. Catalyzes the reductive cleavage of the azo bond in aromatic azo compounds to the corresponding amines. This chain is FMN-dependent NADH:quinone oxidoreductase, found in Escherichia coli O6:K15:H31 (strain 536 / UPEC).